The chain runs to 164 residues: Lipocalin-like 1 protein (164 aa).

It belongs to the calycin superfamily. Lipocalin family.

This chain is Lipocalin-like 1 protein (LCNL1), found in Homo sapiens (Human).